A 134-amino-acid chain; its full sequence is Small ribosomal subunit protein uS9 (134 aa).

The span at 98-114 (SKQELKSHGFLTRDPRK) shows a compositional bias: basic and acidic residues. The segment at 98–134 (SKQELKSHGFLTRDPRKKERKKYGHKKARKSFQFSKR) is disordered. A compositionally biased stretch (basic residues) spans 115 to 134 (KERKKYGHKKARKSFQFSKR).

Belongs to the universal ribosomal protein uS9 family.

This chain is Small ribosomal subunit protein uS9, found in Chlamydia caviae (strain ATCC VR-813 / DSM 19441 / 03DC25 / GPIC) (Chlamydophila caviae).